A 32-amino-acid polypeptide reads, in one-letter code: Hemocyanin C chain (32 aa).

Belongs to the tyrosinase family. Hemocyanin subfamily. In terms of tissue distribution, hemolymph.

It is found in the secreted. It localises to the extracellular space. Hemocyanins are copper-containing oxygen carriers occurring freely dissolved in the hemolymph of many mollusks and arthropods. This is Hemocyanin C chain from Cherax destructor (Common yabby crayfish).